A 356-amino-acid polypeptide reads, in one-letter code: DNA polymerase IV (356 aa).

The UmuC domain occupies 6–187; it reads IIHIDMDYFF…LDIGDFPGVG (182 aa). Mg(2+) is bound by residues aspartate 10 and aspartate 105. Glutamate 106 is an active-site residue.

The protein belongs to the DNA polymerase type-Y family. As to quaternary structure, monomer. Mg(2+) is required as a cofactor.

The protein localises to the cytoplasm. The enzyme catalyses DNA(n) + a 2'-deoxyribonucleoside 5'-triphosphate = DNA(n+1) + diphosphate. In terms of biological role, poorly processive, error-prone DNA polymerase involved in untargeted mutagenesis. Copies undamaged DNA at stalled replication forks, which arise in vivo from mismatched or misaligned primer ends. These misaligned primers can be extended by PolIV. Exhibits no 3'-5' exonuclease (proofreading) activity. May be involved in translesional synthesis, in conjunction with the beta clamp from PolIII. The sequence is that of DNA polymerase IV from Staphylococcus aureus (strain MRSA252).